We begin with the raw amino-acid sequence, 446 residues long: Exodeoxyribonuclease 7 large subunit (446 aa).

The protein belongs to the XseA family. In terms of assembly, heterooligomer composed of large and small subunits.

It localises to the cytoplasm. The enzyme catalyses Exonucleolytic cleavage in either 5'- to 3'- or 3'- to 5'-direction to yield nucleoside 5'-phosphates.. Functionally, bidirectionally degrades single-stranded DNA into large acid-insoluble oligonucleotides, which are then degraded further into small acid-soluble oligonucleotides. This chain is Exodeoxyribonuclease 7 large subunit, found in Acholeplasma laidlawii (strain PG-8A).